The primary structure comprises 252 residues: Adenosylcobinamide-GDP ribazoletransferase (252 aa).

The next 7 membrane-spanning stretches (helical) occupy residues 4–24 (LLLL…LPYI), 35–55 (LVPM…GGMN), 65–85 (SALV…DGAM), 102–122 (VMAD…ILLL), 178–198 (LLPG…VNNH), 201–221 (LITV…AAWF), and 232–252 (TYGA…TILT).

Belongs to the CobS family. The cofactor is Mg(2+).

The protein resides in the cell inner membrane. It catalyses the reaction alpha-ribazole + adenosylcob(III)inamide-GDP = adenosylcob(III)alamin + GMP + H(+). It carries out the reaction alpha-ribazole 5'-phosphate + adenosylcob(III)inamide-GDP = adenosylcob(III)alamin 5'-phosphate + GMP + H(+). The protein operates within cofactor biosynthesis; adenosylcobalamin biosynthesis; adenosylcobalamin from cob(II)yrinate a,c-diamide: step 7/7. Its function is as follows. Joins adenosylcobinamide-GDP and alpha-ribazole to generate adenosylcobalamin (Ado-cobalamin). Also synthesizes adenosylcobalamin 5'-phosphate from adenosylcobinamide-GDP and alpha-ribazole 5'-phosphate. The protein is Adenosylcobinamide-GDP ribazoletransferase of Trichormus variabilis (strain ATCC 29413 / PCC 7937) (Anabaena variabilis).